The primary structure comprises 306 residues: MSSRSKERVVTAFRKIFHKSSNNNNNNNNNHNNNINNNNNNDKVDGATGSSPNINNNNNNNNNNNNHDGAAAPSSAGGVAVAGGAVGSSGSSGAAKNAVVRMAAEQAVWDSPGKRRRQDHKVAPTTERQLVAAPDHTIRTRRLMKEYREMERLQAKNDAVFTVELVNDSLFEWHVRLHVIDPDSPLARDMAEMGVPAILLHLSFPDNFPFAPPFMRVVEPHIEKGYVMEGGAICMELLTPRGWASAYTVEAVIMQFAASVVKGQGRIARKPKSTKEFTRRQAEESFRSLVKTHEKYGWVTPALSDG.

A disordered region spans residues 18–77 (HKSSNNNNNNNNNHNNNINNNNNNDKVDGATGSSPNINNNNNNNNNNNNHDGAAAPSSAG). Low complexity-rich tracts occupy residues 22-41 (NNNNNNNNNHNNNINNNNNN) and 53-77 (NINNNNNNNNNNNNHDGAAAPSSAG). The UBC core domain occupies 138 to 299 (IRTRRLMKEY…VKTHEKYGWV (162 aa)). Cys-234 (glycyl thioester intermediate) is an active-site residue.

Belongs to the ubiquitin-conjugating enzyme family.

It catalyses the reaction S-ubiquitinyl-[E1 ubiquitin-activating enzyme]-L-cysteine + [E2 ubiquitin-conjugating enzyme]-L-cysteine = [E1 ubiquitin-activating enzyme]-L-cysteine + S-ubiquitinyl-[E2 ubiquitin-conjugating enzyme]-L-cysteine.. Its pathway is protein modification; protein ubiquitination. Its function is as follows. Catalyzes the covalent attachment of ubiquitin to other proteins. This Drosophila melanogaster (Fruit fly) protein is Ubiquitin-conjugating enzyme E2Q-like protein CG4502.